A 320-amino-acid chain; its full sequence is Ribose-phosphate pyrophosphokinase 3 (320 aa).

The Mg(2+) site is built by D131, H133, D142, and D146.

This sequence belongs to the ribose-phosphate pyrophosphokinase family.

The protein localises to the cytoplasm. The catalysed reaction is D-ribose 5-phosphate + ATP = 5-phospho-alpha-D-ribose 1-diphosphate + AMP + H(+). It participates in metabolic intermediate biosynthesis; 5-phospho-alpha-D-ribose 1-diphosphate biosynthesis; 5-phospho-alpha-D-ribose 1-diphosphate from D-ribose 5-phosphate (route I): step 1/1. Functionally, 5-phosphoribose 1-diphosphate synthase involved in nucleotide, histidine, and tryptophan biosynthesis. Active in heteromultimeric complexes with other 5-phosphoribose 1-diphosphate synthases (PRS2, PRS3, PRS4 and PRS5). The sequence is that of Ribose-phosphate pyrophosphokinase 3 (PRS3) from Saccharomyces cerevisiae (strain ATCC 204508 / S288c) (Baker's yeast).